Here is a 552-residue protein sequence, read N- to C-terminus: CCR4-NOT transcription complex subunit 6 (552 aa).

LRR repeat units lie at residues 52–73 (HLTA…IAKL), 75–96 (NLVY…LGNM), 98–120 (SLRE…GKLF), and 121–143 (QLQT…CLEP). The segment at 153 to 552 (LLDNLSVSTE…VNGIHLPGRR (400 aa)) is nuclease domain. Glu-235 lines the Mg(2+) pocket. Substrate contacts are provided by Glu-235, Glu-271, His-356, and Pro-361. Residue Asp-407 coordinates Mg(2+). Asp-407 serves as the catalytic Proton donor/acceptor. The substrate site is built by Asn-409, Asn-476, and Phe-481.

It belongs to the CCR4/nocturin family. Subunit of the CCR4-NOT core complex. Requires Mg(2+) as cofactor.

It localises to the cytoplasm. The protein resides in the nucleus. It carries out the reaction Exonucleolytic cleavage of poly(A) to 5'-AMP.. Functionally, poly(A) nuclease involved in mRNA decay. Has 3'-5' RNase activity. The CCR4-NOT complex functions as a general transcription regulation complex. Enhances ligand-dependent transcriptional activity of nuclear hormone receptors. This Xenopus laevis (African clawed frog) protein is CCR4-NOT transcription complex subunit 6 (cnot6).